The sequence spans 67 residues: Small ribosomal subunit protein bS21 (67 aa).

This sequence belongs to the bacterial ribosomal protein bS21 family.

The sequence is that of Small ribosomal subunit protein bS21 from Paramagnetospirillum magneticum (strain ATCC 700264 / AMB-1) (Magnetospirillum magneticum).